The primary structure comprises 884 residues: Formin-like protein 11 (884 aa).

A signal peptide spans 1-18; that stretch reads MVYFRQIFLMIIVVSLHC. A disordered region spans residues 89 to 143; sequence AESASFSPWPAPSPSPFPNGGPIESPAYPPAPPRPIPPHLRRPLPQRTHPLEQPE. Pro residues-rich tracts occupy residues 97–107 and 115–126; these read WPAPSPSPFPN and AYPPAPPRPIPP. The helical transmembrane segment at 158-178 threads the bilayer; it reads ILVPVVASTASAIGFVVCVVG. 3 disordered regions span residues 307 to 384, 416 to 469, and 512 to 532; these read SSDD…FSNK, SFPI…APLP, and MQSS…GKHL. Residues 329–343 are compositionally biased toward low complexity; the sequence is SNASSASGSVNVGSS. Basic and acidic residues predominate over residues 346-358; that stretch reads FSEHKLDIPECSR. 2 stretches are compositionally biased toward pro residues: residues 367–379 and 425–436; these read APPP…PPLP and QPRPPPPPPPPQ. In terms of domain architecture, FH2 spans 461 to 884; it reads LGKDGAPLPK…NSPSPLAPFR (424 aa).

It belongs to the formin-like family. Class-I subfamily.

The protein resides in the membrane. In terms of biological role, might be involved in the organization and polarity of the actin cytoskeleton. The polypeptide is Formin-like protein 11 (FH11) (Arabidopsis thaliana (Mouse-ear cress)).